The primary structure comprises 200 residues: Proteasome subunit beta 2 (200 aa).

Residue Met-1 is a propeptide, removed in mature form; by autocatalysis. Catalysis depends on Thr-2, which acts as the Nucleophile.

It belongs to the peptidase T1B family. As to quaternary structure, the 20S proteasome core is composed of 14 alpha and 14 beta subunits that assemble into four stacked heptameric rings, resulting in a barrel-shaped structure. The two inner rings, each composed of seven catalytic beta subunits, are sandwiched by two outer rings, each composed of seven alpha subunits. The catalytic chamber with the active sites is on the inside of the barrel. Has a gated structure, the ends of the cylinder being occluded by the N-termini of the alpha-subunits. Is capped at one or both ends by the proteasome regulatory ATPase, PAN.

The protein localises to the cytoplasm. The enzyme catalyses Cleavage of peptide bonds with very broad specificity.. With respect to regulation, the formation of the proteasomal ATPase PAN-20S proteasome complex, via the docking of the C-termini of PAN into the intersubunit pockets in the alpha-rings, triggers opening of the gate for substrate entry. Interconversion between the open-gate and close-gate conformations leads to a dynamic regulation of the 20S proteasome proteolysis activity. Component of the proteasome core, a large protease complex with broad specificity involved in protein degradation. This chain is Proteasome subunit beta 2, found in Pyrobaculum islandicum (strain DSM 4184 / JCM 9189 / GEO3).